The primary structure comprises 258 residues: NAD(P)H-hydrate epimerase (258 aa).

Residues 15–244 (AFQLDQELMS…RIAKEYGIED (230 aa)) form the YjeF N-terminal domain. 75–79 (NNGGD) is a binding site for (6S)-NADPHX. K(+) contacts are provided by N76 and D145. Residues 149-155 (GFSFKPP) and D181 each bind (6S)-NADPHX. Residue S184 coordinates K(+).

It belongs to the NnrE/AIBP family. The cofactor is K(+).

It localises to the cytoplasm. It is found in the mitochondrion. The enzyme catalyses (6R)-NADHX = (6S)-NADHX. It carries out the reaction (6R)-NADPHX = (6S)-NADPHX. Catalyzes the epimerization of the S- and R-forms of NAD(P)HX, a damaged form of NAD(P)H that is a result of enzymatic or heat-dependent hydration. This is a prerequisite for the S-specific NAD(P)H-hydrate dehydratase to allow the repair of both epimers of NAD(P)HX. The chain is NAD(P)H-hydrate epimerase from Candida albicans (strain WO-1) (Yeast).